A 118-amino-acid chain; its full sequence is U-scoloptoxin(05)-Cw1a (118 aa).

The N-terminal stretch at 1-22 (MNPLNLSTFIVFTLFAASATTA) is a signal peptide.

It belongs to the scoloptoxin-05 family. In terms of processing, contains 5 disulfide bonds. In terms of tissue distribution, expressed by the venom gland.

The protein localises to the secreted. The polypeptide is U-scoloptoxin(05)-Cw1a (Cormocephalus westwoodi (Westwood's green centipede)).